Reading from the N-terminus, the 339-residue chain is Tetracenomycin polyketide synthesis 8-O-methyl transferase TcmO (339 aa).

S-adenosyl-L-methionine contacts are provided by residues Asp200 and 226 to 228; that span reads GDF. The Proton acceptor role is filled by His246.

It belongs to the class I-like SAM-binding methyltransferase superfamily. Cation-independent O-methyltransferase family.

It functions in the pathway antibiotic biosynthesis; tetracenomycin C biosynthesis. In Streptomyces glaucescens, this protein is Tetracenomycin polyketide synthesis 8-O-methyl transferase TcmO (tcmO).